Reading from the N-terminus, the 463-residue chain is Elongation factor 1-alpha 1 (463 aa).

One can recognise a tr-type G domain in the interval 5–242 (KIHINIVVIG…DAILPPARPT (238 aa)). The tract at residues 14 to 21 (GHVDSGKS) is G1. Position 14 to 21 (14 to 21 (GHVDSGKS)) interacts with GTP. Positions 70–74 (GITID) are G2. Residues 91–94 (DAPG) form a G3 region. Residues 91–95 (DAPGH) and 153–156 (NKMD) each bind GTP. The segment at 153-156 (NKMD) is G4. The interval 194–196 (SGW) is G5. Residues E301 and E374 each carry the 5-glutamyl glycerylphosphorylethanolamine modification.

This sequence belongs to the TRAFAC class translation factor GTPase superfamily. Classic translation factor GTPase family. EF-Tu/EF-1A subfamily.

The protein resides in the cytoplasm. Its function is as follows. This protein promotes the GTP-dependent binding of aminoacyl-tRNA to the A-site of ribosomes during protein biosynthesis. In Drosophila melanogaster (Fruit fly), this protein is Elongation factor 1-alpha 1.